The primary structure comprises 400 residues: Riboflavin biosynthesis protein RibBA (400 aa).

Positions 1–202 (MTTFGTIEQA…IADLVMYRRR (202 aa)) are DHBP synthase. D-ribulose 5-phosphate contacts are provided by residues 28–29 (RE), Asp33, 141–145 (RTGHT), and Glu165. Glu29 provides a ligand contact to Mg(2+). His144 is a binding site for Mg(2+). The interval 203-400 (TEKQVELVAE…KRDRMGHLLG (198 aa)) is GTP cyclohydrolase II. 253–257 (RAHSE) contacts GTP. Positions 258, 269, and 271 each coordinate Zn(2+). Residues Gln274, 297–299 (EGR), and Thr319 each bind GTP. The active-site Proton acceptor; for GTP cyclohydrolase activity is the Asp331. Arg333 (nucleophile; for GTP cyclohydrolase activity) is an active-site residue. Residues Thr354 and Lys359 each contribute to the GTP site.

The protein in the N-terminal section; belongs to the DHBP synthase family. In the C-terminal section; belongs to the GTP cyclohydrolase II family. Mg(2+) is required as a cofactor. Requires Mn(2+) as cofactor. Zn(2+) serves as cofactor.

It carries out the reaction D-ribulose 5-phosphate = (2S)-2-hydroxy-3-oxobutyl phosphate + formate + H(+). The enzyme catalyses GTP + 4 H2O = 2,5-diamino-6-hydroxy-4-(5-phosphoribosylamino)-pyrimidine + formate + 2 phosphate + 3 H(+). It participates in cofactor biosynthesis; riboflavin biosynthesis; 2-hydroxy-3-oxobutyl phosphate from D-ribulose 5-phosphate: step 1/1. Its pathway is cofactor biosynthesis; riboflavin biosynthesis; 5-amino-6-(D-ribitylamino)uracil from GTP: step 1/4. In terms of biological role, catalyzes the conversion of D-ribulose 5-phosphate to formate and 3,4-dihydroxy-2-butanone 4-phosphate. Its function is as follows. Catalyzes the conversion of GTP to 2,5-diamino-6-ribosylamino-4(3H)-pyrimidinone 5'-phosphate (DARP), formate and pyrophosphate. The sequence is that of Riboflavin biosynthesis protein RibBA from Salinispora tropica (strain ATCC BAA-916 / DSM 44818 / JCM 13857 / NBRC 105044 / CNB-440).